Here is a 249-residue protein sequence, read N- to C-terminus: Ditrans,polycis-undecaprenyl-diphosphate synthase ((2E,6E)-farnesyl-diphosphate specific) (249 aa).

D26 is a catalytic residue. D26 lines the Mg(2+) pocket. Residues 27–30 (GNGR), W31, R39, H43, and 71–73 (SRE) contribute to the substrate site. N74 functions as the Proton acceptor in the catalytic mechanism. Residues W75, R77, R194, and 200–202 (RIS) each bind substrate. A Mg(2+)-binding site is contributed by E213.

The protein belongs to the UPP synthase family. In terms of assembly, homodimer. The cofactor is Mg(2+).

It catalyses the reaction 8 isopentenyl diphosphate + (2E,6E)-farnesyl diphosphate = di-trans,octa-cis-undecaprenyl diphosphate + 8 diphosphate. Functionally, catalyzes the sequential condensation of isopentenyl diphosphate (IPP) with (2E,6E)-farnesyl diphosphate (E,E-FPP) to yield (2Z,6Z,10Z,14Z,18Z,22Z,26Z,30Z,34E,38E)-undecaprenyl diphosphate (di-trans,octa-cis-UPP). UPP is the precursor of glycosyl carrier lipid in the biosynthesis of bacterial cell wall polysaccharide components such as peptidoglycan and lipopolysaccharide. This is Ditrans,polycis-undecaprenyl-diphosphate synthase ((2E,6E)-farnesyl-diphosphate specific) from Buchnera aphidicola subsp. Schizaphis graminum (strain Sg).